The chain runs to 228 residues: Lipoprotein-releasing system ATP-binding protein LolD (228 aa).

The ABC transporter domain maps to 6-228; the sequence is IKCLNVVKGY…EAGVLNKQGQ (223 aa). An ATP-binding site is contributed by 42–49; it reads GASGSGKS.

This sequence belongs to the ABC transporter superfamily. Lipoprotein translocase (TC 3.A.1.125) family. As to quaternary structure, the complex is composed of two ATP-binding proteins (LolD) and two transmembrane proteins (LolC and LolE).

Its subcellular location is the cell inner membrane. Part of the ABC transporter complex LolCDE involved in the translocation of mature outer membrane-directed lipoproteins, from the inner membrane to the periplasmic chaperone, LolA. Responsible for the formation of the LolA-lipoprotein complex in an ATP-dependent manner. The chain is Lipoprotein-releasing system ATP-binding protein LolD from Saccharophagus degradans (strain 2-40 / ATCC 43961 / DSM 17024).